The following is a 962-amino-acid chain: Insulin-degrading enzyme homolog (962 aa).

Positions 1-10 are enriched in low complexity; the sequence is MVANEQQQQQ. Positions 1–21 are disordered; sequence MVANEQQQQQQEEERKEVKLI. A Zn(2+)-binding site is contributed by H74. E77 serves as the catalytic Proton acceptor. H78 and E155 together coordinate Zn(2+).

This sequence belongs to the peptidase M16 family. As to quaternary structure, homodimer. Requires Zn(2+) as cofactor.

The protein localises to the cytoplasm. The sequence is that of Insulin-degrading enzyme homolog from Dictyostelium discoideum (Social amoeba).